The sequence spans 351 residues: DNA polymerase IV (351 aa).

One can recognise a UmuC domain in the interval Ile-4–Gly-185. Mg(2+) is bound by residues Asp-8 and Asp-103. Residue Glu-104 is part of the active site.

Belongs to the DNA polymerase type-Y family. In terms of assembly, monomer. Mg(2+) serves as cofactor.

It localises to the cytoplasm. It catalyses the reaction DNA(n) + a 2'-deoxyribonucleoside 5'-triphosphate = DNA(n+1) + diphosphate. Its function is as follows. Poorly processive, error-prone DNA polymerase involved in untargeted mutagenesis. Copies undamaged DNA at stalled replication forks, which arise in vivo from mismatched or misaligned primer ends. These misaligned primers can be extended by PolIV. Exhibits no 3'-5' exonuclease (proofreading) activity. May be involved in translesional synthesis, in conjunction with the beta clamp from PolIII. This chain is DNA polymerase IV, found in Escherichia coli (strain ATCC 8739 / DSM 1576 / NBRC 3972 / NCIMB 8545 / WDCM 00012 / Crooks).